A 211-amino-acid chain; its full sequence is Suppressor of RNA silencing p3 (211 aa).

This sequence belongs to the tenuiviruses p3 protein family. As to quaternary structure, homodimer.

It localises to the host cytoplasm. Functionally, acts as a suppressor of RNA-mediated gene silencing, also known as post-transcriptional gene silencing (PTGS), presumably through the binding of dsRNA. The chain is Suppressor of RNA silencing p3 from Avena sativa (Oat).